The sequence spans 244 residues: Putative lipoprotein LprA (244 aa).

The signal sequence occupies residues Met1–Gly24. Cys25 carries the N-palmitoyl cysteine lipid modification. Cys25 carries S-diacylglycerol cysteine lipidation.

It belongs to the LppX/LprAFG lipoprotein family.

Its subcellular location is the cell membrane. This is Putative lipoprotein LprA (lprA) from Mycobacterium tuberculosis (strain CDC 1551 / Oshkosh).